A 425-amino-acid polypeptide reads, in one-letter code: MAFLALGINHKTASVDVRERVAFTPEQLVDALQQLCRLTSSREAAILSTCNRSELYIEQDHLSADAVLQWLADYHRLSIDELRASAYVHEEHDAVKHMMRVASGLDSLVLGEPQILGQMKSAYAVAREAGTVGPLLGRLFQATFSAAKQVRTDTAIGENPVSVAFAAVSLAKQIFADLGRSQALLIGAGETITLVARHLHEQGVRRIVVANRTLERASILAEQFGAHAVLLADIPQELANSDIVISSTASQLPILGKGAVESALKQRRHKPIFMVDIAVPRDIETEVGELDDVYLYTVDDLHDVVAENLKSRQGAAQAAEELVSVGAEDFMLRLRELAAVDVLRAYRQQSERLRDEELQKALRLLANGGNPEDVLAQLARGLTNKLLHAPSVQLKKLSAEGRLDALAMAQELFALNEGSTDKSPQ.

Substrate-binding positions include 49-52 (TCNR), serine 107, 112-114 (EPQ), and glutamine 118. Catalysis depends on cysteine 50, which acts as the Nucleophile. 187–192 (GAGETI) serves as a coordination point for NADP(+).

Belongs to the glutamyl-tRNA reductase family. In terms of assembly, homodimer.

The catalysed reaction is (S)-4-amino-5-oxopentanoate + tRNA(Glu) + NADP(+) = L-glutamyl-tRNA(Glu) + NADPH + H(+). It functions in the pathway porphyrin-containing compound metabolism; protoporphyrin-IX biosynthesis; 5-aminolevulinate from L-glutamyl-tRNA(Glu): step 1/2. Catalyzes the NADPH-dependent reduction of glutamyl-tRNA(Glu) to glutamate 1-semialdehyde (GSA). The chain is Glutamyl-tRNA reductase from Pseudomonas putida (strain ATCC 47054 / DSM 6125 / CFBP 8728 / NCIMB 11950 / KT2440).